The primary structure comprises 214 residues: Killer cell lectin-like receptor subfamily B member 1 (214 aa).

Residues 1-42 (MDAPVLYAELNLAETRGLRCTSAPSLPQDACQGPGWHRVALK) lie on the Cytoplasmic side of the membrane. Residues 43 to 63 (LGCAGLIFLLMVLSVLVGFLV) traverse the membrane as a helical; Signal-anchor for type II membrane protein segment. Residues 64–214 (QKPLIEKCSV…WICQKTLKHV (151 aa)) are Extracellular-facing. A C-type lectin domain is found at 98-208 (HCDKCLFTSQ…CSSDNHWICQ (111 aa)). Disulfide bonds link Cys119–Cys207 and Cys186–Cys199.

It is found in the membrane. This chain is Killer cell lectin-like receptor subfamily B member 1 (Klrb1), found in Mus musculus (Mouse).